Reading from the N-terminus, the 398-residue chain is O-methyltransferase hmp5 (398 aa).

Residues 233-234 (GG), Glu261, and 283-284 (DF) each bind S-adenosyl-L-methionine. The Proton acceptor role is filled by His303.

This sequence belongs to the class I-like SAM-binding methyltransferase superfamily. Cation-independent O-methyltransferase family.

The protein operates within secondary metabolite biosynthesis. In terms of biological role, O-methyltransferase; part of the gene cluster that mediates the biosynthesis of hypothemycin, a resorcylic acid lactone (RAL) that irreversibly inhibits a subset of protein kinases with a conserved cysteine in the ATP binding site such as human ERK2. The first step is performed by both PKSs hmp3 and hmp8 and leads to the production of 7',8'-dehydrozearalenol (DHZ). The highly reducing PKS hpm8 synthesizes the reduced hexaketide (7S,11S,2E,8E)-7,11-dihydroxy-dodeca-2,8-dienoate, which is transferred downstream to the non-reducing PKS hpm3. Hpm3 then extends the reduced hexaketide to a nonaketide, after which regioselective cyclization and macrolactonization affords DHZ. The next step is the conversion of DHZ into aigialomycin C and is performed by the O-methyltransferase hmp5, the FAD-binding monooxygenase hmp7, and the cytochrome P450 monooxygenase hmp1. The wide substrate tolerance of the hmp5 and hmp7 implies that the reactions from DHZ to aigialomycin C can occur in any order. The steps from aigialomycin C to hypothemycin are less well established. The FAD-linked oxidoreductase hmp9 presumably catalyzes oxidation of the C-6' hydroxyl to a ketone. The timing of this oxidation is important, since the resulting enone functional group is a Michael acceptor that can react spontaneously with glutathione, an abundant metabolite in fungal cells. The glutathione S-transferase hmp2 catalyzes cis-trans isomerization of the 7',8' double bond with equilibrium favoring the trans isomer. The hpm6-encoded transporter might preferentially pump hypothemycin out of the cell relative to the trans isomer aigialomycin A. The cis-to-trans isomerization may be coupled with C-4' hydroxylation, since all known hypothemycin analogs containing the enone functional group also have hydroxyl groups at both C-4' and C-5'. This Hypomyces subiculosus (Nectria subiculosa) protein is O-methyltransferase hmp5.